A 315-amino-acid polypeptide reads, in one-letter code: Cytochrome bo(3) ubiquinol oxidase subunit 2 (315 aa).

The first 24 residues, 1 to 24 (MRLRKYNKSLGWLSLFAGTVLLSG), serve as a signal peptide directing secretion. C25 carries the N-palmitoyl cysteine lipid modification. C25 carries the S-diacylglycerol cysteine lipid modification. The Periplasmic portion of the chain corresponds to 25–50 (CNSALLDPKGQIGLEQRSLILTAFGL). The helical transmembrane segment at 51–68 (MLIVVIPAILMAVGFAWK) threads the bilayer. Residues 69-92 (YRASNKDAKYSPNWSHSNKVEAVV) are Cytoplasmic-facing. Residues 93 to 111 (WTVPILIIIFLAVLTWKTT) form a helical membrane-spanning segment. Over 112–315 (HALEPSKPLA…MDMSHAESAH (204 aa)) the chain is Periplasmic. Residues 288 to 315 (MDMTQPEGEHSAHEGMEGMDMSHAESAH) are disordered. The segment covering 294–315 (EGEHSAHEGMEGMDMSHAESAH) has biased composition (basic and acidic residues).

It belongs to the cytochrome c oxidase subunit 2 family. As to quaternary structure, heterooctamer of two A chains, two B chains, two C chains and two D chains.

The protein resides in the cell inner membrane. Its function is as follows. Cytochrome bo(3) ubiquinol terminal oxidase is the component of the aerobic respiratory chain of E.coli that predominates when cells are grown at high aeration. Has proton pump activity across the membrane in addition to electron transfer, pumping 2 protons/electron. The chain is Cytochrome bo(3) ubiquinol oxidase subunit 2 (cyoA) from Escherichia coli O6:H1 (strain CFT073 / ATCC 700928 / UPEC).